The sequence spans 480 residues: Protein nucleotidyltransferase YdiU (480 aa).

ATP-binding residues include G86, G88, R89, K109, D121, G122, R172, and R179. D248 (proton acceptor) is an active-site residue. 2 residues coordinate Mg(2+): N249 and D258. D258 is an ATP binding site.

It belongs to the SELO family. Mg(2+) is required as a cofactor. Mn(2+) serves as cofactor.

It catalyses the reaction L-seryl-[protein] + ATP = 3-O-(5'-adenylyl)-L-seryl-[protein] + diphosphate. It carries out the reaction L-threonyl-[protein] + ATP = 3-O-(5'-adenylyl)-L-threonyl-[protein] + diphosphate. The catalysed reaction is L-tyrosyl-[protein] + ATP = O-(5'-adenylyl)-L-tyrosyl-[protein] + diphosphate. The enzyme catalyses L-histidyl-[protein] + UTP = N(tele)-(5'-uridylyl)-L-histidyl-[protein] + diphosphate. It catalyses the reaction L-seryl-[protein] + UTP = O-(5'-uridylyl)-L-seryl-[protein] + diphosphate. It carries out the reaction L-tyrosyl-[protein] + UTP = O-(5'-uridylyl)-L-tyrosyl-[protein] + diphosphate. Its function is as follows. Nucleotidyltransferase involved in the post-translational modification of proteins. It can catalyze the addition of adenosine monophosphate (AMP) or uridine monophosphate (UMP) to a protein, resulting in modifications known as AMPylation and UMPylation. This Salmonella typhi protein is Protein nucleotidyltransferase YdiU.